Consider the following 210-residue polypeptide: Isochorismatase domain-containing protein 2B (210 aa).

Position 178 is an N6-succinyllysine (K178).

It belongs to the isochorismatase family. As to quaternary structure, interacts with CDKN2A. As to expression, ubiquitous. Expressed predominantly in uterus, stomach and urinary tract.

The protein localises to the cytoplasm. The protein resides in the nucleus. This is Isochorismatase domain-containing protein 2B (Isoc2b) from Mus musculus (Mouse).